Consider the following 307-residue polypeptide: MRIVFAGTPEFAVSSLRAAARHHEVVAVYTQPDRPAGRGRGLAPSPVKLEAVARGIPVYQPESLKDEAAQQQLRDLQPDLMVVVAYGLILPKAVLAIPTHGCWNVHASLLPRWRGAAPIQRAIQAGDTKTGVCLMQMEAGLDTGPVLLHQELPIATTDTGGQLHDKLAELGAQVLSDGLGLLRAGIKPVARPQPEQGVTYAHKLDKAEARLDWVLDAGALARTVRAFNPWPIAEASLAGERVRIHGAVALDLAHGQAPGTVLAASRDGIDIACGQGALRLRVLQREGGKAITAADYLNARRDLRVGA.

Position 108–111 (108–111 (SLLP)) interacts with (6S)-5,6,7,8-tetrahydrofolate.

This sequence belongs to the Fmt family.

It catalyses the reaction L-methionyl-tRNA(fMet) + (6R)-10-formyltetrahydrofolate = N-formyl-L-methionyl-tRNA(fMet) + (6S)-5,6,7,8-tetrahydrofolate + H(+). In terms of biological role, attaches a formyl group to the free amino group of methionyl-tRNA(fMet). The formyl group appears to play a dual role in the initiator identity of N-formylmethionyl-tRNA by promoting its recognition by IF2 and preventing the misappropriation of this tRNA by the elongation apparatus. This chain is Methionyl-tRNA formyltransferase, found in Stenotrophomonas maltophilia (strain R551-3).